Consider the following 428-residue polypeptide: Glutamate-1-semialdehyde 2,1-aminomutase (428 aa).

K267 carries the N6-(pyridoxal phosphate)lysine modification.

This sequence belongs to the class-III pyridoxal-phosphate-dependent aminotransferase family. HemL subfamily. In terms of assembly, homodimer. Pyridoxal 5'-phosphate serves as cofactor.

The protein resides in the cytoplasm. The enzyme catalyses (S)-4-amino-5-oxopentanoate = 5-aminolevulinate. It participates in porphyrin-containing compound metabolism; protoporphyrin-IX biosynthesis; 5-aminolevulinate from L-glutamyl-tRNA(Glu): step 2/2. It functions in the pathway porphyrin-containing compound metabolism; chlorophyll biosynthesis. This Prochlorococcus marinus (strain MIT 9313) protein is Glutamate-1-semialdehyde 2,1-aminomutase.